Here is a 440-residue protein sequence, read N- to C-terminus: Xaa-Pro dipeptidase (440 aa).

Residues aspartate 244, aspartate 255, histidine 335, glutamate 380, and glutamate 419 each contribute to the Mn(2+) site.

The protein belongs to the peptidase M24B family. Bacterial-type prolidase subfamily. The cofactor is Mn(2+).

The catalysed reaction is Xaa-L-Pro dipeptide + H2O = an L-alpha-amino acid + L-proline. In terms of biological role, splits dipeptides with a prolyl residue in the C-terminal position. The sequence is that of Xaa-Pro dipeptidase from Shewanella denitrificans (strain OS217 / ATCC BAA-1090 / DSM 15013).